The chain runs to 719 residues: Fusicoccadiene synthase (719 aa).

Residues 1 to 334 (MEFKYSEVVE…RYNPDVSFNK (334 aa)) are fusicocca-2,10(14)-diene synthase. Residues Asp92 and Asp96 each contribute to the Mg(2+) site. Positions 335 to 719 (TQLEWMRQGL…MRLLLELLRV (385 aa)) are geranylgeranyl diphosphate synthase. The interval 358-404 (EIDSDESAVSPTADESDSTEDSLGSGSRQDSSLSTGLSLSPVHSNEG) is disordered. Residues 378 to 400 (DSLGSGSRQDSSLSTGLSLSPVH) show a composition bias toward polar residues. Isopentenyl diphosphate is bound by residues Lys435, Arg438, and His467. Residues Asp474 and Asp478 each contribute to the Mg(2+) site. Arg483 provides a ligand contact to dimethylallyl diphosphate. Arg484 is an isopentenyl diphosphate binding site. Dimethylallyl diphosphate is bound by residues Lys561, Thr562, Gln602, Asn609, Lys619, and Lys629.

The protein in the N-terminal section; belongs to the terpene synthase family. It in the C-terminal section; belongs to the FPP/GGPP synthase family. As to quaternary structure, hexamer.

The catalysed reaction is geranylgeranyl diphosphate = fusicocca-2,10(14)-diene + diphosphate. It catalyses the reaction isopentenyl diphosphate + (2E,6E)-farnesyl diphosphate = (2E,6E,10E)-geranylgeranyl diphosphate + diphosphate. It functions in the pathway mycotoxin biosynthesis. Multifunctional diterpene synthase; part of the 2 gene clusters that mediate the biosynthesis of fusicoccins, diterpene glucosides that display phytohormone-like activity and function as potent activators of plasma membrane H(+)-ATPases in plants by modifying 14-3-3 proteins and cause the plant disease constriction canker. The first step in the pathway is performed by the fusicoccadiene synthase PaFS that possesses both prenyl transferase and terpene cyclase activity, converting isopentenyl diphosphate and dimethylallyl diphosphate into geranylgeranyl diphosphate (GGDP) and successively converting GGDP into fusicocca-2,10(14)-diene, a precursor for fusicoccin H. Fusicoccadiene synthase is an allosteric enzyme for GGPP cyclization that generates 64% fusicoccadiene, 9% delta-araneosene, and one additional unidentified diterpene product, when incubated with GGPP. In the absence of isopentenyl diphosphate (IPP), PaFS can also solvolyze the shorter chain geranyl diphosphate (GPP) and farnesyl diphosphate (FPP) as alternative substrates to yield predominantly acyclic products. FPP is converted to farnesol (60.5%), nerolidol (14.0%), and farnesene (14.0%), while GPP is converted to a mixture of geraniol (59.5%) and linalool (35.0%). The second step is the oxidation at the C-8 position by the cytochrome P450 monooxygenase PaP450-2 to yield fusicocca-2,10(14)-diene-8-beta-ol. The cytochrome P450 monooxygenase PaP450-1 then catalyzes the hydroxylation at the C-16 position to produce fusicocca-2,10(14)-diene-8-beta,16-diol. The dioxygenase fc-dox then catalyzes the 16-oxydation of fusicocca-2,10(14)-diene-8-beta,16-diol to yield an aldehyde (8-beta-hydroxyfusicocca-1,10(14)-dien-16-al). The short-chain dehydrogenase/reductase fc-sdr catalyzes the reduction of the aldehyde to yield fusicocca-1,10(14)-diene-8-beta,16-diol. The next step is the hydroxylation at C-9 performed by the cytochrome P450 monooxygenase PaP450-3 that leads to fusicoccin H aglycon which is glycosylated to fusicoccin H by the O-glycosyltransferase PAGT. Hydroxylation at C-12 by the cytochrome P450 monooxygenase PaP450-4 leads then to the production of fusicoccin Q and is followed by methylation by the O-methyltransferase PAMT to yield fusicoccin P. Fusicoccin P is further converted to fusicoccin J via prenylation by the O-glucose prenyltransferase PaPT. Cytochrome P450 monooxygenase PaP450-5 then performs hydroxylation at C-19 to yield dideacetyl-fusicoccin A which is acetylated to 3'-O-deacetyl-fusicoccin A by the O-acetyltransferase PaAT-2. Finally, a another acetylation by the O-acetyltransferase PaAT-1 yields fusicoccin A. This Phomopsis amygdali (Fusicoccum amygdali) protein is Fusicoccadiene synthase.